The chain runs to 371 residues: tRNA-specific 2-thiouridylase MnmA (371 aa).

Residues 13–20 (GMSGGVDS) and Met39 contribute to the ATP site. Residues 99–101 (NPD) are interaction with target base in tRNA. Residue Cys104 is the Nucleophile of the active site. Cys104 and Cys200 are oxidised to a cystine. Residue Gly128 participates in ATP binding. Residues 150-152 (KDQ) form an interaction with tRNA region. Cys200 functions as the Cysteine persulfide intermediate in the catalytic mechanism. Residues 308–309 (RY) are interaction with tRNA.

It belongs to the MnmA/TRMU family.

It is found in the cytoplasm. It carries out the reaction S-sulfanyl-L-cysteinyl-[protein] + uridine(34) in tRNA + AH2 + ATP = 2-thiouridine(34) in tRNA + L-cysteinyl-[protein] + A + AMP + diphosphate + H(+). Functionally, catalyzes the 2-thiolation of uridine at the wobble position (U34) of tRNA, leading to the formation of s(2)U34. The sequence is that of tRNA-specific 2-thiouridylase MnmA from Bacillus cytotoxicus (strain DSM 22905 / CIP 110041 / 391-98 / NVH 391-98).